The chain runs to 340 residues: Ketol-acid reductoisomerase (NADP(+)) (340 aa).

The KARI N-terminal Rossmann domain maps to 3 to 182; sequence VQMEYEKDVK…GAARVGLLET (180 aa). NADP(+) contacts are provided by residues 26–29, Arg-49, Ser-53, and 83–86; these read YGSQ and DEIQ. His-108 is a catalytic residue. Position 134 (Gly-134) interacts with NADP(+). The KARI C-terminal knotted domain maps to 183–328; the sequence is TYKEETEEDL…AELRKAMPFV (146 aa). The Mg(2+) site is built by Asp-191, Glu-195, Glu-227, and Glu-231. Ser-252 is a substrate binding site.

This sequence belongs to the ketol-acid reductoisomerase family. Mg(2+) is required as a cofactor.

The catalysed reaction is (2R)-2,3-dihydroxy-3-methylbutanoate + NADP(+) = (2S)-2-acetolactate + NADPH + H(+). It carries out the reaction (2R,3R)-2,3-dihydroxy-3-methylpentanoate + NADP(+) = (S)-2-ethyl-2-hydroxy-3-oxobutanoate + NADPH + H(+). Its pathway is amino-acid biosynthesis; L-isoleucine biosynthesis; L-isoleucine from 2-oxobutanoate: step 2/4. The protein operates within amino-acid biosynthesis; L-valine biosynthesis; L-valine from pyruvate: step 2/4. Involved in the biosynthesis of branched-chain amino acids (BCAA). Catalyzes an alkyl-migration followed by a ketol-acid reduction of (S)-2-acetolactate (S2AL) to yield (R)-2,3-dihydroxy-isovalerate. In the isomerase reaction, S2AL is rearranged via a Mg-dependent methyl migration to produce 3-hydroxy-3-methyl-2-ketobutyrate (HMKB). In the reductase reaction, this 2-ketoacid undergoes a metal-dependent reduction by NADPH to yield (R)-2,3-dihydroxy-isovalerate. The chain is Ketol-acid reductoisomerase (NADP(+)) from Streptococcus thermophilus (strain CNRZ 1066).